Here is a 111-residue protein sequence, read N- to C-terminus: Large ribosomal subunit protein uL23 (111 aa).

The protein belongs to the universal ribosomal protein uL23 family. As to quaternary structure, part of the 50S ribosomal subunit. Contacts protein L29, and trigger factor when it is bound to the ribosome.

In terms of biological role, one of the early assembly proteins it binds 23S rRNA. One of the proteins that surrounds the polypeptide exit tunnel on the outside of the ribosome. Forms the main docking site for trigger factor binding to the ribosome. This Nitrosospira multiformis (strain ATCC 25196 / NCIMB 11849 / C 71) protein is Large ribosomal subunit protein uL23.